Reading from the N-terminus, the 208-residue chain is Holliday junction resolvase RecU (208 aa).

The interval M1–G30 is disordered. The Mg(2+) site is built by T87, D89, E102, and Q121.

It belongs to the RecU family. Mg(2+) is required as a cofactor.

It localises to the cytoplasm. The enzyme catalyses Endonucleolytic cleavage at a junction such as a reciprocal single-stranded crossover between two homologous DNA duplexes (Holliday junction).. Endonuclease that resolves Holliday junction intermediates in genetic recombination. Cleaves mobile four-strand junctions by introducing symmetrical nicks in paired strands. Promotes annealing of linear ssDNA with homologous dsDNA. Required for DNA repair, homologous recombination and chromosome segregation. This Staphylococcus saprophyticus subsp. saprophyticus (strain ATCC 15305 / DSM 20229 / NCIMB 8711 / NCTC 7292 / S-41) protein is Holliday junction resolvase RecU.